We begin with the raw amino-acid sequence, 2009 residues long: Sodium channel protein type 1 subunit alpha (2009 aa).

Residues 1–128 (MEQTVLVPPG…KIAIKILVHS (128 aa)) lie on the Cytoplasmic side of the membrane. Basic and acidic residues predominate over residues 28–48 (RIAEEKAKNPKPDKKDDDENG). Residues 28–60 (RIAEEKAKNPKPDKKDDDENGPKPNSDLEAGKN) are disordered. An I repeat occupies 110-454 (ILTPFNPLRK…QQMLEQLKKQ (345 aa)). Residues 129-146 (LFSMLIMCTILTNCVFMT) traverse the membrane as a helical segment. The Extracellular segment spans residues 147–152 (MSNPPD). Residues 153–177 (WTKNVEYTFTGIYTFESLIKIIARG) traverse the membrane as a helical segment. Residues 178–188 (FCLEDFTFLRD) lie on the Cytoplasmic side of the membrane. A helical transmembrane segment spans residues 189–205 (PWNWLDFTVITFAYVTE). Residues 206–213 (FVDLGNVS) are Extracellular-facing. The chain crosses the membrane as a helical span at residues 214-235 (ALRTFRVLRALKTISVIPGLKT). Residues 236–245 (IVGALIQSVK) lie on the Cytoplasmic side of the membrane. The helical transmembrane segment at 246–269 (KLSDVMILTVFCLSVFALIGLQLF) threads the bilayer. At 270–369 (MGNLRNKCVQ…YGYTSFDTFS (100 aa)) the chain is on the extracellular side. 2 disulfides stabilise this stretch: Cys277-Cys345 and Cys336-Cys351. Residues Asn295, Asn301, Asn306, and Asn338 are each glycosylated (N-linked (GlcNAc...) asparagine). Positions 370–384 (WAFLSLFRLMTQDFW) form an intramembrane region, pore-forming. Over 385-397 (ENLYQLTLRAAGK) the chain is Extracellular. Residues 398–423 (TYMIFFVLVIFLGSFYLINLILAVVA) form a helical membrane-spanning segment. Topologically, residues 424 to 768 (MAYEEQNQAT…HIVNLVVMDP (345 aa)) are cytoplasmic. Positions 455–528 (QEAAQQAAAT…EFHKSESEDS (74 aa)) are disordered. A compositionally biased stretch (low complexity) spans 456-466 (EAAQQAAATTA). At Ser470 the chain carries Phosphoserine. Residues 479–492 (LSDSSSEASKLSSK) are compositionally biased toward low complexity. Basic residues predominate over residues 495-506 (KERRNRRKKRKQ). Basic and acidic residues predominate over residues 507-528 (KEQSGGEEKDDDEFHKSESEDS). Residues Ser523, Ser525, Ser550, Ser551, Ser607, and Ser730 each carry the phosphoserine modification. Positions 584-627 (VGSENDFADDEHSTFEDNESRRDSLFVPRRHGERRNSNLSQTSR) are disordered. Residues 593-607 (DEHSTFEDNESRRDS) show a composition bias toward basic and acidic residues. The stretch at 750–1022 (CSPYWLKVKH…QIAVDRMHKG (273 aa)) is one II repeat. A helical membrane pass occupies residues 769 to 787 (FVDLAITICIVLNTLFMAM). At 788 to 797 (EHYPMTEHFN) the chain is on the extracellular side. Residues 798–820 (HVLTVGNLVFTGIFTAEMFLKII) form a helical membrane-spanning segment. The Cytoplasmic portion of the chain corresponds to 821 to 830 (AMDPYYYFQE). A helical membrane pass occupies residues 831–849 (GWNIFDGFIVTLSLVELGL). At 850 to 854 (ANVEG) the chain is on the extracellular side. Residues 855–874 (LSVLRSFRLLRVFKLAKSWP) form a helical membrane-spanning segment. Over 875–891 (TLNMLIKIIGNSVGALG) the chain is Cytoplasmic. Residues 892-912 (NLTLVLAIIVFIFAVVGMQLF) traverse the membrane as a helical segment. At 913–938 (GKSYKDCVCKIATDCKLPRWHMNDFF) the chain is on the extracellular side. Cys921 and Cys927 are oxidised to a cystine. Positions 939 to 952 (HSFLIVFRVLCGEW) form an intramembrane region, pore-forming. Over 953 to 965 (IETMWDCMEVAGQ) the chain is Extracellular. A disulfide bridge links Cys959 with Cys968. The chain crosses the membrane as a helical span at residues 966-992 (AMCLTVFMMVMVIGNLVVLNLFLALLL). Over 993–1218 (SSFSADNLAA…RTCFRIVEHN (226 aa)) the chain is Cytoplasmic. A disordered region spans residues 1129–1163 (TEDFSSESDLEESKEKLNESSSSSEGSTVDIGAPA). The III repeat unit spans residues 1200-1514 (RGKQWWNLRR…KKYYNAMKKL (315 aa)). The chain crosses the membrane as a helical span at residues 1219 to 1237 (WFETFIVFMILLSSGALAF). Over 1238–1250 (EDIYIDQRKTIKT) the chain is Extracellular. Residues 1251 to 1276 (MLEYADKVFTYIFILEMLLKWVAYGY) traverse the membrane as a helical segment. Residues 1277-1278 (QT) are Cytoplasmic-facing. The chain crosses the membrane as a helical span at residues 1279–1304 (YFTNAWCWLDFLIVDVSLVSLTANAL). The Extracellular segment spans residues 1305-1313 (GYSELGAIK). The chain crosses the membrane as a helical span at residues 1314 to 1332 (SLRTLRALRPLRALSRFEG). At 1333–1345 (MRVVVNALLGAIP) the chain is on the cytoplasmic side. Residues 1346–1369 (SIMNVLLVCLIFWLIFSIMGVNLF) traverse the membrane as a helical segment. At 1370-1415 (AGKFYHCVNTTTGDIFEISEVNNHSDCLKLIERNETARWKNVKVNF) the chain is on the extracellular side. Cys1376 and Cys1396 form a disulfide bridge. The segment at residues 1416 to 1433 (DNVGFGYLSLLQVATFKG) is an intramembrane region (pore-forming). At 1434-1457 (WMDIMYAAVDSRNVELQPKYEESL) the chain is on the extracellular side. Residues 1458–1483 (YMYLYFVIFIIFGSFFTLNLFIGVII) form a helical membrane-spanning segment. The Cytoplasmic segment spans residues 1484 to 1541 (DNFNQQKKKFGGQDIFMTEEQKKYYNAMKKLGSKKPQKPIPRPGNKFQGMVFDFVTRQ). Ser1516 bears the Phosphoserine; by PKC mark. An IV repeat occupies 1523 to 1821 (IPRPGNKFQG…WEKFDPDATQ (299 aa)). A helical transmembrane segment spans residues 1542 to 1560 (VFDISIMILICLNMVTMMV). Residues 1561–1571 (ETDDQSDYVTS) are Extracellular-facing. The S1-S2 loop of repeat IV stretch occupies residues 1561–1571 (ETDDQSDYVTS). The chain crosses the membrane as a helical span at residues 1572-1593 (ILSRINLVFIVLFTGECVLKLI). Topologically, residues 1594–1601 (SLRHYYFT) are cytoplasmic. Residues 1602-1623 (IGWNIFDFVVVILSIVGMFLAE) form a helical membrane-spanning segment. The tract at residues 1619-1636 (MFLAELIEKYFVSPTLFR) is S3b-S4 loop of repeat IV. At 1624–1636 (LIEKYFVSPTLFR) the chain is on the extracellular side. Residues 1637-1655 (VIRLARIGRILRLIKGAKG) form a helical membrane-spanning segment. Topologically, residues 1656 to 1665 (IRTLLFALMM) are cytoplasmic. A helical membrane pass occupies residues 1666 to 1688 (SLPALFNIGLLLFLVMFIYAIFG). Residues 1689-1711 (MSNFAYVKREVGIDDMFNFETFG) are Extracellular-facing. Residues 1712 to 1726 (NSMICLFQITTSAGW) constitute an intramembrane region (pore-forming). Residues 1727-1759 (DGLLAPILNSKPPDCDPNKVNPGSSVKGDCGNP) are Extracellular-facing. A disulfide bridge connects residues Cys1741 and Cys1756. Residues 1760-1788 (SVGIFFFVSYIIISFLVVVNMYIAVILEN) traverse the membrane as a helical segment. The Cytoplasmic portion of the chain corresponds to 1789–2009 (FSVATEESAE…EGKDEKAKGK (221 aa)). The 30-residue stretch at 1915–1944 (EEVSAVIIQRAYRRHLLKRTVKQASFTYNK) folds into the IQ domain. Residues 1984–2009 (PSYDRVTKPIVEKHEQEGKDEKAKGK) form a disordered region. Basic and acidic residues predominate over residues 1988-2009 (RVTKPIVEKHEQEGKDEKAKGK).

Belongs to the sodium channel (TC 1.A.1.10) family. Nav1.1/SCN1A subfamily. As to quaternary structure, the Nav1.1 voltage-gated sodium channel consists of an ion-conducting alpha subunit SCN1A which is functional on its own regulated by one or more beta-1 (SCN1B), beta-2 (SCN2B), beta-3 (SCN3B) and beta-4 (SCN4B) subunits. SCN1B and SCN3B are non-covalently associated with SCN1A. SCN2B and SCN4B are disulfide-linked to SCN1A. SCN1B regulates both the expression at the plasma membrane and the voltage dependence of Nav1.1 inactivation. SCN3B and SCN4B reduce Nav1.1 conductance. Probably interacts with TMEM233; modulates the gating properties of NaV1.1. Interacts with FGF13; regulates the steady-state inactivation of Nav.1.1. Post-translationally, phosphorylation at Ser-1516 by PKC in a highly conserved cytoplasmic loop slows inactivation of the sodium channel and reduces peak sodium currents. In terms of tissue distribution, present in cerebellar Purkinje neurons (at protein level). Expressed by myelinated, non-C-fiber neurons in sensory ganglia.

The protein resides in the cell membrane. The enzyme catalyses Na(+)(in) = Na(+)(out). With respect to regulation, activated by the spider toxins Hm1a and Hm1b (H.maculata, AC P60992 and AC P0DOC5) eliciting acute pain and mechanical allodynia. Pore-forming subunit of Nav1.1, a voltage-gated sodium (Nav) channel that directly mediates the depolarizing phase of action potentials in excitable membranes. Navs, also called VGSCs (voltage-gated sodium channels) or VDSCs (voltage-dependent sodium channels), operate by switching between closed and open conformations depending on the voltage difference across the membrane. In the open conformation they allow Na(+) ions to selectively pass through the pore, along their electrochemical gradient. The influx of Na(+) ions provokes membrane depolarization, initiating the propagation of electrical signals throughout cells and tissues. By regulating the excitability of neurons, ensures that they respond appropriately to synaptic inputs, maintaining the balance between excitation and inhibition in brain neural circuits. Nav1.1 plays a role in controlling the excitability and action potential propagation from somatosensory neurons, thereby contributing to the sensory perception of mechanically-induced pain. This Mus musculus (Mouse) protein is Sodium channel protein type 1 subunit alpha.